A 2079-amino-acid chain; its full sequence is Non-reducing polyketide synthase Dhc5 (2079 aa).

Positions Leu9–His246 are N-terminal acylcarrier protein transacylase domain (SAT). The 433-residue stretch at Asn366–Asp798 folds into the Ketosynthase family 3 (KS3) domain. Residues Cys543, His678, and His717 each act as for beta-ketoacyl synthase activity in the active site. Positions Val895–Ser1199 are malonyl-CoA:ACP transacylase (MAT) domain. Residue Ser986 is the For acyl/malonyl transferase activity of the active site. The segment at Glu1268–Asp1414 is N-terminal hotdog fold. The 317-residue stretch at Glu1268–Lys1584 folds into the PKS/mFAS DH domain. A product template (PT) domain region spans residues Met1304–Ala1581. The interval Arg1435–Lys1584 is C-terminal hotdog fold. The segment at Arg1613–Glu1639 is disordered. Over residues Leu1615–Thr1628 the composition is skewed to polar residues. Residues Ala1641 to Glu1718 enclose the Carrier domain. Ser1678 carries the O-(pantetheine 4'-phosphoryl)serine modification. The tract at residues Val1721–Asp1784 is disordered. The segment covering Ser1727–Pro1757 has biased composition (low complexity). Over residues Ser1758 to Asp1784 the composition is skewed to basic and acidic residues. A thioesterase (TE) domain region spans residues Ala1812–Leu2057. The For thioesterase activity role is filled by His2064.

Its pathway is mycotoxin biosynthesis. In terms of biological role, highly reducing polyketide synthase; part of the gene cluster that mediates the biosynthesis of 10,11-dehydrocurvularin, a prevalent fungal phytotoxin with heat shock response and immune-modulatory activities. The highly reducing polyketide synthase Dhc3 is responsible for biosynthesis up to the tetraketide stage. The non-reducing polyketide synthase Dhc5 then conducts four additional chain extension cycles, producing the unreduced part of the nascent octaketide from C-1 to C-8 in 10,11-dehydrocurvularin. The chain is Non-reducing polyketide synthase Dhc5 from Alternaria cinerariae.